Consider the following 782-residue polypeptide: uncharacterized protein (782 aa).

Residues 10–30 (LLTITIGAVAVSSILLGGIFY) form a helical membrane-spanning segment. Basic and acidic residues predominate over residues 57–76 (LDYQKARPSIKDSNLKEIPK). A disordered region spans residues 57–171 (LDYQKARPSI…PQPQQVPNNS (115 aa)). The span at 77–97 (PKPQPKPKPQPTPFPDPIPTP) shows a compositional bias: pro residues. A compositionally biased stretch (basic and acidic residues) spans 98–124 (PKKEELKKPDIKPEEPKKPEIKPEPKP). Over residues 125-135 (EPIPQPAPPIE) the composition is skewed to pro residues.

It to U.parvum UU046.

The protein resides in the membrane. This is an uncharacterized protein from Ureaplasma parvum serovar 3 (strain ATCC 700970).